Here is a 417-residue protein sequence, read N- to C-terminus: Glucose-1-phosphate adenylyltransferase (417 aa).

Alpha-D-glucose 1-phosphate contacts are provided by residues tyrosine 105, glycine 170, 185 to 186, and serine 203; that span reads EK.

This sequence belongs to the bacterial/plant glucose-1-phosphate adenylyltransferase family. In terms of assembly, homotetramer.

The catalysed reaction is alpha-D-glucose 1-phosphate + ATP + H(+) = ADP-alpha-D-glucose + diphosphate. The protein operates within glycan biosynthesis; glycogen biosynthesis. Involved in the biosynthesis of ADP-glucose, a building block required for the elongation reactions to produce glycogen. Catalyzes the reaction between ATP and alpha-D-glucose 1-phosphate (G1P) to produce pyrophosphate and ADP-Glc. The polypeptide is Glucose-1-phosphate adenylyltransferase (Granulibacter bethesdensis (strain ATCC BAA-1260 / CGDNIH1)).